A 155-amino-acid chain; its full sequence is Ribosomal RNA large subunit methyltransferase H (155 aa).

S-adenosyl-L-methionine is bound by residues Leu-72, Gly-103, and 122–127 (LSPLTL).

Belongs to the RNA methyltransferase RlmH family. Homodimer.

It is found in the cytoplasm. It catalyses the reaction pseudouridine(1915) in 23S rRNA + S-adenosyl-L-methionine = N(3)-methylpseudouridine(1915) in 23S rRNA + S-adenosyl-L-homocysteine + H(+). Functionally, specifically methylates the pseudouridine at position 1915 (m3Psi1915) in 23S rRNA. The protein is Ribosomal RNA large subunit methyltransferase H of Pasteurella multocida (strain Pm70).